The sequence spans 385 residues: Protein-glutamate methylesterase/protein-glutamine glutaminase (385 aa).

Asp53 is modified (4-aspartylphosphate). The 190-residue stretch at 196 to 385 (KHKTGKIIVV…EIADHVLRRS (190 aa)) folds into the CheB-type methylesterase domain. Catalysis depends on residues Ser208, His234, and Asp330.

It belongs to the CheB family. Post-translationally, phosphorylated by CheA. Phosphorylation of the N-terminal regulatory domain activates the methylesterase activity.

Its subcellular location is the cytoplasm. It catalyses the reaction [protein]-L-glutamate 5-O-methyl ester + H2O = L-glutamyl-[protein] + methanol + H(+). The enzyme catalyses L-glutaminyl-[protein] + H2O = L-glutamyl-[protein] + NH4(+). Functionally, involved in chemotaxis. Part of a chemotaxis signal transduction system that modulates chemotaxis in response to various stimuli. Catalyzes the demethylation of specific methylglutamate residues introduced into the chemoreceptors (methyl-accepting chemotaxis proteins or MCP) by CheR. Also mediates the irreversible deamidation of specific glutamine residues to glutamic acid. The polypeptide is Protein-glutamate methylesterase/protein-glutamine glutaminase (Borreliella burgdorferi (strain ATCC 35210 / DSM 4680 / CIP 102532 / B31) (Borrelia burgdorferi)).